Here is a 45-residue protein sequence, read N- to C-terminus: MIVAIMVMNAKGVSEVVGTLMAVLITFALVAVVFNFITAATVKNT.

The chain crosses the membrane as a helical span at residues 15 to 37; sequence EVVGTLMAVLITFALVAVVFNFI.

The protein localises to the membrane. This is an uncharacterized protein from Archaeoglobus fulgidus (strain ATCC 49558 / DSM 4304 / JCM 9628 / NBRC 100126 / VC-16).